Consider the following 155-residue polypeptide: MEKKRYRPNVAAIVLSSNYPKKVEFFIAARSDVPDSWQFPQGGIDKGESPKEALLRELKEEIGTDKIEIIAEFPEWVSYDFPKKIAKKMYPYDGQTQKYFLVKLKPEAKIDLDTKEPEFNDYKFVPYKDLFHYVTFFKRPVYKKVLEYFKKEGYF.

The region spanning 5-147 (RYRPNVAAIV…KRPVYKKVLE (143 aa)) is the Nudix hydrolase domain. Positions 42–63 (GGIDKGESPKEALLRELKEEIG) match the Nudix box motif.

The protein belongs to the Nudix hydrolase family. RppH subfamily. A divalent metal cation serves as cofactor.

Accelerates the degradation of transcripts by removing pyrophosphate from the 5'-end of triphosphorylated RNA, leading to a more labile monophosphorylated state that can stimulate subsequent ribonuclease cleavage. The sequence is that of RNA pyrophosphohydrolase from Nitratiruptor sp. (strain SB155-2).